Consider the following 108-residue polypeptide: Small ribosomal subunit protein uS17 (108 aa).

It belongs to the universal ribosomal protein uS17 family. Part of the 30S ribosomal subunit.

In terms of biological role, one of the primary rRNA binding proteins, it binds specifically to the 5'-end of 16S ribosomal RNA. This Methanoculleus marisnigri (strain ATCC 35101 / DSM 1498 / JR1) protein is Small ribosomal subunit protein uS17.